The following is a 570-amino-acid chain: Sulfite reductase [NADPH] hemoprotein beta-component (570 aa).

Positions 434, 440, 479, and 483 each coordinate [4Fe-4S] cluster. Cysteine 483 lines the siroheme pocket.

It belongs to the nitrite and sulfite reductase 4Fe-4S domain family. Alpha(8)-beta(8). The alpha component is a flavoprotein, the beta component is a hemoprotein. It depends on siroheme as a cofactor. Requires [4Fe-4S] cluster as cofactor.

The catalysed reaction is hydrogen sulfide + 3 NADP(+) + 3 H2O = sulfite + 3 NADPH + 4 H(+). The protein operates within sulfur metabolism; hydrogen sulfide biosynthesis; hydrogen sulfide from sulfite (NADPH route): step 1/1. Its function is as follows. Component of the sulfite reductase complex that catalyzes the 6-electron reduction of sulfite to sulfide. This is one of several activities required for the biosynthesis of L-cysteine from sulfate. The protein is Sulfite reductase [NADPH] hemoprotein beta-component of Salmonella heidelberg (strain SL476).